We begin with the raw amino-acid sequence, 1405 residues long: Xanthine dehydrogenase (1405 aa).

Residues 17 to 104 form the 2Fe-2S ferredoxin-type domain; the sequence is NKLTFYVNGV…GKHLITVEGI (88 aa). Residues Cys-56, Cys-61, Cys-64, Cys-86, Cys-125, Cys-128, Cys-161, and Cys-163 each coordinate [2Fe-2S] cluster. In terms of domain architecture, FAD-binding PCMH-type spans 288 to 474; it reads FGNEQKVWFR…TKIFVPETVP (187 aa). Residues 316–323, Phe-397, 407–411, Asp-420, Ile-464, and Lys-483 each bind FAD; these read IVGGASEI and TPAGN. Mo-molybdopterin contacts are provided by Gln-833 and Phe-864. Residues Glu-868 and Arg-946 each contribute to the substrate site. A Mo-molybdopterin-binding site is contributed by Arg-978. Phe-980 lines the substrate pocket. Mo-molybdopterin is bound at residue Ala-1147. The active-site Proton acceptor is Glu-1333.

It belongs to the xanthine dehydrogenase family. Homodimer. Requires Mo-molybdopterin as cofactor. [2Fe-2S] cluster is required as a cofactor. It depends on FAD as a cofactor.

Its subcellular location is the cytoplasm. The enzyme catalyses hypoxanthine + NAD(+) + H2O = xanthine + NADH + H(+). It catalyses the reaction xanthine + NAD(+) + H2O = urate + NADH + H(+). The protein operates within purine metabolism. Its activity is regulated as follows. Completely inhibited by allopurinol and significantly inhibited by adenine. Inhibited by Fe(2+), Cd(2+) and Zn(2+) and strongly inhibited by Cu(2+). Mg(2+) and Mo(2+) have no effect on activity. Key enzyme in purine degradation. Catalyzes the oxidation of hypoxanthine to xanthine. Catalyzes the oxidation of xanthine to uric acid. Oxidizes xanthine, hypoxanthine and pterine at high rates. Can also act on purine and guanine. This is Xanthine dehydrogenase from Blastobotrys adeninivorans (Yeast).